A 267-amino-acid polypeptide reads, in one-letter code: 2-keto-3-deoxy-L-rhamnonate aldolase (267 aa).

The active-site Proton acceptor is H49. Q151 contacts substrate. E153 contacts Mg(2+). Residues A178 and D179 each coordinate substrate. D179 lines the Mg(2+) pocket.

It belongs to the HpcH/HpaI aldolase family. KDR aldolase subfamily. Homohexamer. Mg(2+) is required as a cofactor.

The enzyme catalyses 2-dehydro-3-deoxy-L-rhamnonate = (S)-lactaldehyde + pyruvate. Its function is as follows. Catalyzes the reversible retro-aldol cleavage of 2-keto-3-deoxy-L-rhamnonate (KDR) to pyruvate and lactaldehyde. The sequence is that of 2-keto-3-deoxy-L-rhamnonate aldolase from Shigella boydii serotype 4 (strain Sb227).